The following is a 437-amino-acid chain: Epsilon-sarcoglycan (437 aa).

Residues 1-317 lie on the Extracellular side of the membrane; it reads MQLPWWWELG…LKSRDYYTDF (317 aa). N200 carries N-linked (GlcNAc...) asparagine glycosylation. Residues 318 to 338 form a helical membrane-spanning segment; that stretch reads LVTLAVPSAVALVLFLILAYI. At 339–437 the chain is on the cytoplasmic side; sequence MCCRREGVEK…QQQTTGKWYS (99 aa). The disordered stretch occupies residues 418-437; sequence QNLPHQTQIPQQQTTGKWYS.

Belongs to the sarcoglycan alpha/epsilon family. Post-translationally, N-glycosylated. In terms of processing, ubiquitinated, leading to its degradation by the proteasome.

Its subcellular location is the cell membrane. The protein localises to the sarcolemma. The protein resides in the cytoplasm. It is found in the cytoskeleton. It localises to the cell projection. Its subcellular location is the dendrite. The protein localises to the golgi apparatus. Functionally, component of the sarcoglycan complex, a subcomplex of the dystrophin-glycoprotein complex which forms a link between the F-actin cytoskeleton and the extracellular matrix. This chain is Epsilon-sarcoglycan (SGCE), found in Bos taurus (Bovine).